The primary structure comprises 339 residues: Phenylalanine--tRNA ligase alpha subunit (339 aa).

E254 provides a ligand contact to Mg(2+).

This sequence belongs to the class-II aminoacyl-tRNA synthetase family. Phe-tRNA synthetase alpha subunit type 1 subfamily. Tetramer of two alpha and two beta subunits. It depends on Mg(2+) as a cofactor.

Its subcellular location is the cytoplasm. The catalysed reaction is tRNA(Phe) + L-phenylalanine + ATP = L-phenylalanyl-tRNA(Phe) + AMP + diphosphate + H(+). This is Phenylalanine--tRNA ligase alpha subunit from Clostridium botulinum (strain ATCC 19397 / Type A).